We begin with the raw amino-acid sequence, 450 residues long: Sensor histidine kinase EnvZ (450 aa).

Residues 1 to 15 lie on the Cytoplasmic side of the membrane; that stretch reads MRRLRFSPRSSFART. The chain crosses the membrane as a helical span at residues 16-35; that stretch reads LLLIVTLLFASLVTTYLVVL. Residues 36–158 lie on the Periplasmic side of the membrane; the sequence is NFAILPSLQQ…LTEIHQGDFS (123 aa). The polyP-periplasmic motif motif lies at 71 to 75; that stretch reads VVPPA. A helical transmembrane segment spans residues 159–179; sequence PLFRYTLAIMLLAIGGAWLFI. Residues 180–232 enclose the HAMP domain; that stretch reads RIQNRPLVDLEHAALQVGKGIIPPPLREYGASEVRSVTRAFNHMAAGVKQLAD. Residues 180-450 are Cytoplasmic-facing; that stretch reads RIQNRPLVDL…TRAQGTTKEG (271 aa). The polyP-cytoplasmic motif motif lies at 201 to 205; it reads IPPPL. The tract at residues 223 to 289 is cytoplasmic dimerization domain (CDD), when dimerized forms osmosensitive core; sequence MAAGVKQLAD…IIEQFIDYLR (67 aa). In terms of domain architecture, Histidine kinase spans 240–440; it reads GVSHDLRTPL…SIRAWLPVPV (201 aa). Residues H243, 347–351, D373, 392–393, and 402–406 contribute to the ATP site; these read NAARY, RG, and TGLGL. The residue at position 243 (H243) is a Phosphohistidine; by autocatalysis.

In terms of assembly, homodimer. Interacts with MzrA. In terms of processing, autophosphorylated. Incubation of isolated EnvZ C-terminal fragment (residues 180-450) with increasing levels of NaCl or sucrose increases its autophosphorylation.

It is found in the cell inner membrane. It catalyses the reaction ATP + protein L-histidine = ADP + protein N-phospho-L-histidine.. Its activity is regulated as follows. Activity is modulated by MzrA. In the presence of 0.2 M NaCl, 2.0 mM sodium cholate (bile salts) decreases expression from the ompC promoter; how this is mediated is unknown. Autophosphorylation is inhibited by the angucycline antibiotic waldiomycin in a non-competitive manner; waldiomycin prevents dimerization of the cytoplasmic domain and autophosphorylation. Member of the two-component regulatory system EnvZ/OmpR involved in osmoregulation (particularly of genes ompF and ompC) as well as other genes. EnvZ functions as a membrane-associated protein kinase that phosphorylates OmpR in response to environmental signals; at low osmolarity OmpR activates ompF transcription, while at high osmolarity it represses ompF and activates ompC transcription. Also dephosphorylates OmpR in the presence of ATP. The cytoplasmic dimerization domain (CDD) forms an osmosensitive core; increasing osmolarity stabilizes this segment (possibly by its contraction), enhancing the autophosphorylation rate and consequently, downstream phosphotransfer to OmpR and signaling. Autophosphorylation is greater when full-length EnvZ is reconstituted in a lipid environment, lipid-mediated allostery impacts the kinase function of EnvZ. Involved in acid stress response; this requires EnvZ but not OmpR phosphorylation, and suggests that EnvZ senses cytoplasmic acidic pH. This is Sensor histidine kinase EnvZ (envZ) from Escherichia coli (strain K12).